Reading from the N-terminus, the 468-residue chain is UDP-glycosyltransferase 89B2 (468 aa).

UDP-alpha-D-glucose contacts are provided by residues S287, 347–348 (WV), 365–373 (HCGWNSVME), and 387–390 (SADQ).

It belongs to the UDP-glycosyltransferase family.

Functionally, may glycosylate diterpenes or flavonols in leaves. The protein is UDP-glycosyltransferase 89B2 of Stevia rebaudiana (Stevia).